The chain runs to 529 residues: 2-(3-amino-3-carboxypropyl)histidine synthase subunit 2-2 (529 aa).

[4Fe-4S] cluster is bound by residues Cys130, Cys151, and Cys366.

Belongs to the DPH1/DPH2 family. DPH2 subfamily. In terms of assembly, component of the 2-(3-amino-3-carboxypropyl)histidine synthase complex composed of DPH1, DPH2, DPH3 and a NADH-dependent reductase, predominantly CBR1. It depends on [4Fe-4S] cluster as a cofactor.

It is found in the cytoplasm. The protein operates within protein modification; peptidyl-diphthamide biosynthesis. Functionally, required for the first step of diphthamide biosynthesis, a post-translational modification of histidine which occurs in elongation factor 2. DPH1 and DPH2 transfer a 3-amino-3-carboxypropyl (ACP) group from S-adenosyl-L-methionine (SAM) to a histidine residue, the reaction is assisted by a reduction system comprising DPH3 and a NADH-dependent reductase, predominantly CBR1. Facilitates the reduction of the catalytic iron-sulfur cluster found in the DPH1 subunit. The sequence is that of 2-(3-amino-3-carboxypropyl)histidine synthase subunit 2-2 from Candida albicans (strain SC5314 / ATCC MYA-2876) (Yeast).